Reading from the N-terminus, the 274-residue chain is Insulin-like growth factor-binding protein-like 1 (274 aa).

An N-terminal signal peptide occupies residues 1–21 (MPRSPGLFLLLLVLQPLPALG). In terms of domain architecture, IGFBP N-terminal spans 30–105 (RNPECGPCRP…PEGTGLCVCA (76 aa)). 7 disulfides stabilise this stretch: C34–C59, C37–C61, C42–C62, C48–C65, C73–C87, C81–C102, and C111–C147. One can recognise a Kazal-like domain in the interval 91–149 (AAGAAPEGTGLCVCAQRGSVCGSDGRSYPSVCALRLRARQAPRALPGHLHKARDGPCEF). The Ig-like C2-type domain maps to 151-255 (PVVITPPQSV…GEAQSHGTVT (105 aa)). The N-linked (GlcNAc...) asparagine glycan is linked to N162. A disulfide bond links C172 and C239.

It localises to the secreted. Its function is as follows. IGF-binding proteins prolong the half-life of IGFs and have been shown to either inhibit or stimulate the growth promoting effects of the IGFs in cell culture. They alter the interaction of IGFs with their cell surface receptors. The protein is Insulin-like growth factor-binding protein-like 1 (IGFBPL1) of Bos taurus (Bovine).